Here is a 628-residue protein sequence, read N- to C-terminus: (-)-beta-pinene synthase 1, chloroplastic (628 aa).

The transit peptide at 1 to 51 (MDLISVLPSASKSCVCLHKPLSSSTHKLKPFCRTIRILGMPRPRKSVLMVS) directs the protein to the chloroplast. Mg(2+) is bound by residues Asp-379, Asp-383, and Asp-531. The DDXXD motif signature appears at 379–383 (DDMYD).

The protein belongs to the terpene synthase family. Tpsd subfamily. Requires Mg(2+) as cofactor. Mn(2+) is required as a cofactor.

It localises to the plastid. The protein resides in the chloroplast. It carries out the reaction (2E)-geranyl diphosphate = (1S,5S)-beta-pinene + diphosphate. The catalysed reaction is (2E)-geranyl diphosphate = (1S,5S)-alpha-pinene + diphosphate. The protein operates within terpene metabolism; oleoresin biosynthesis. It participates in secondary metabolite biosynthesis; terpenoid biosynthesis. Functionally, monoterpene synthase (TPS) involved in the biosynthesis of monoterpene natural products included in conifer oleoresin secretions and volatile emissions; these compounds contribute to biotic and abiotic stress defense against herbivores and pathogens. Catalyzes the conversion of (2E)-geranyl diphosphate (GPP) to (-)-beta-pinene and, to a lower extent, to (-)-alpha-pinene. The protein is (-)-beta-pinene synthase 1, chloroplastic of Pinus banksiana (Jack pine).